We begin with the raw amino-acid sequence, 265 residues long: Glutamate racemase (265 aa).

Substrate-binding positions include 10–11 (DS) and 42–43 (YG). Cys-73 functions as the Proton donor/acceptor in the catalytic mechanism. 74 to 75 (NT) provides a ligand contact to substrate. Cys-180 serves as the catalytic Proton donor/acceptor. 181-182 (TH) is a substrate binding site.

The protein belongs to the aspartate/glutamate racemases family.

It carries out the reaction L-glutamate = D-glutamate. Its pathway is cell wall biogenesis; peptidoglycan biosynthesis. Provides the (R)-glutamate required for cell wall biosynthesis. The polypeptide is Glutamate racemase (Synechococcus sp. (strain CC9605)).